The sequence spans 300 residues: tRNA pseudouridine synthase B (300 aa).

The active-site Nucleophile is D38.

The protein belongs to the pseudouridine synthase TruB family. Type 1 subfamily.

It catalyses the reaction uridine(55) in tRNA = pseudouridine(55) in tRNA. Responsible for synthesis of pseudouridine from uracil-55 in the psi GC loop of transfer RNAs. The sequence is that of tRNA pseudouridine synthase B from Dehalococcoides mccartyi (strain ATCC BAA-2266 / KCTC 15142 / 195) (Dehalococcoides ethenogenes (strain 195)).